A 92-amino-acid polypeptide reads, in one-letter code: CRISPR-associated endoribonuclease Cas2 (92 aa).

A Mg(2+)-binding site is contributed by Asp9.

This sequence belongs to the CRISPR-associated endoribonuclease Cas2 protein family. In terms of assembly, homodimer, forms a heterotetramer with a Cas1 homodimer. It depends on Mg(2+) as a cofactor.

CRISPR (clustered regularly interspaced short palindromic repeat), is an adaptive immune system that provides protection against mobile genetic elements (viruses, transposable elements and conjugative plasmids). CRISPR clusters contain sequences complementary to antecedent mobile elements and target invading nucleic acids. CRISPR clusters are transcribed and processed into CRISPR RNA (crRNA). Functions as a ssRNA-specific endoribonuclease. Involved in the integration of spacer DNA into the CRISPR cassette. In Aeropyrum pernix (strain ATCC 700893 / DSM 11879 / JCM 9820 / NBRC 100138 / K1), this protein is CRISPR-associated endoribonuclease Cas2.